The chain runs to 196 residues: Pyridoxal 5'-phosphate synthase subunit PdxT (196 aa).

Gly46–Ser48 is an L-glutamine binding site. The active-site Nucleophile is Cys78. L-glutamine contacts are provided by residues Arg105 and Ile134–Arg135. Active-site charge relay system residues include His170 and Glu172.

The protein belongs to the glutaminase PdxT/SNO family. In the presence of PdxS, forms a dodecamer of heterodimers. Only shows activity in the heterodimer.

It carries out the reaction aldehydo-D-ribose 5-phosphate + D-glyceraldehyde 3-phosphate + L-glutamine = pyridoxal 5'-phosphate + L-glutamate + phosphate + 3 H2O + H(+). The enzyme catalyses L-glutamine + H2O = L-glutamate + NH4(+). Its pathway is cofactor biosynthesis; pyridoxal 5'-phosphate biosynthesis. Functionally, catalyzes the hydrolysis of glutamine to glutamate and ammonia as part of the biosynthesis of pyridoxal 5'-phosphate. The resulting ammonia molecule is channeled to the active site of PdxS. The sequence is that of Pyridoxal 5'-phosphate synthase subunit PdxT from Pelotomaculum thermopropionicum (strain DSM 13744 / JCM 10971 / SI).